The primary structure comprises 469 residues: Arginine biosynthesis bifunctional protein ArgJ, mitochondrial (469 aa).

6 residues coordinate substrate: Thr-199, Lys-228, Thr-239, Glu-325, Asn-464, and Thr-469. The Nucleophile role is filled by Thr-239.

This sequence belongs to the ArgJ family. As to quaternary structure, heterodimer of an alpha and a beta chain. In terms of processing, the alpha and beta chains are autoproteolytically processed from a single precursor protein within the mitochondrion.

It localises to the mitochondrion matrix. It carries out the reaction N(2)-acetyl-L-ornithine + L-glutamate = N-acetyl-L-glutamate + L-ornithine. It catalyses the reaction L-glutamate + acetyl-CoA = N-acetyl-L-glutamate + CoA + H(+). Its pathway is amino-acid biosynthesis; L-arginine biosynthesis; L-ornithine and N-acetyl-L-glutamate from L-glutamate and N(2)-acetyl-L-ornithine (cyclic): step 1/1. The protein operates within amino-acid biosynthesis; L-arginine biosynthesis; N(2)-acetyl-L-ornithine from L-glutamate: step 1/4. Functionally, catalyzes two activities which are involved in the cyclic version of arginine biosynthesis: the synthesis of acetylglutamate from glutamate and acetyl-CoA, and of ornithine by transacetylation between acetylornithine and glutamate. This Sordaria macrospora (strain ATCC MYA-333 / DSM 997 / K(L3346) / K-hell) protein is Arginine biosynthesis bifunctional protein ArgJ, mitochondrial.